The chain runs to 608 residues: MCGIVGYIGKKEAAPILVEGLSKLEYRGYDSAGVAIIEDQVIRTRKCKGRLVNLEEKLNEESMIGDIGIGHTRWATHGEPSDKNSHPHNNEKGTISVVHNGIIENYIELREWLTSEGYKFVSETDTEVLPHLIDYYYKGDLLEAVMTAISKVEGSYAIGVVCSEEPDKVVAVRKDSPLIVGLGEEEYFIASDIPAVLNHTRDIYLLKDNEFVLMTKDGVKLFDKEGKEIKREIYHVTWNADAAEKGGYDHFMLKEIHEQPKVIKDTMTSRIMLGKDIKLDNIEISKEQMEKINKIYIVACGTAYHAGLVGKYTIEKLARIPVEVDIASEFRYKNPIIDKDTLMIVISQSGETADTLAALREAKKKGARVIAVTNVVGSSISREADDILYTWAGPEIAVASTKAYETQLVAMYILALYFAQEKGTLNKEELEELKEEMLSIPDKAEKCLETDEIMKKLASKTHMKKDMFFLGRGLDYAVALEGSLKLKEISYIHSEAYAAGELKHGPIALIEEGTIVITLATQEELFDKTVSNIKEVTTRGAKAIGIAFEGQKNMDKAVEEAIYIPKTKSIFAPLLSVIPLQLYSYYVSLEKGCDVDKPRNLAKSVTVE.

Cys-2 acts as the Nucleophile; for GATase activity in catalysis. The region spanning 2-217 (CGIVGYIGKK…DNEFVLMTKD (216 aa)) is the Glutamine amidotransferase type-2 domain. SIS domains lie at 284–424 (ISKE…EKGT) and 453–598 (IMKK…VDKP). Lys-603 functions as the For Fru-6P isomerization activity in the catalytic mechanism.

As to quaternary structure, homodimer.

It is found in the cytoplasm. The enzyme catalyses D-fructose 6-phosphate + L-glutamine = D-glucosamine 6-phosphate + L-glutamate. Functionally, catalyzes the first step in hexosamine metabolism, converting fructose-6P into glucosamine-6P using glutamine as a nitrogen source. The chain is Glutamine--fructose-6-phosphate aminotransferase [isomerizing] from Clostridium tetani (strain Massachusetts / E88).